The primary structure comprises 879 residues: Phosphoenolpyruvate carboxylase (879 aa).

Residues His138 and Lys545 contribute to the active site.

Belongs to the PEPCase type 1 family. Requires Mg(2+) as cofactor.

The enzyme catalyses oxaloacetate + phosphate = phosphoenolpyruvate + hydrogencarbonate. Its function is as follows. Forms oxaloacetate, a four-carbon dicarboxylic acid source for the tricarboxylic acid cycle. This Actinobacillus pleuropneumoniae serotype 5b (strain L20) protein is Phosphoenolpyruvate carboxylase.